The following is a 476-amino-acid chain: Exodeoxyribonuclease 7 large subunit (476 aa).

It belongs to the XseA family. As to quaternary structure, heterooligomer composed of large and small subunits.

Its subcellular location is the cytoplasm. It catalyses the reaction Exonucleolytic cleavage in either 5'- to 3'- or 3'- to 5'-direction to yield nucleoside 5'-phosphates.. Its function is as follows. Bidirectionally degrades single-stranded DNA into large acid-insoluble oligonucleotides, which are then degraded further into small acid-soluble oligonucleotides. The protein is Exodeoxyribonuclease 7 large subunit of Bartonella bacilliformis (strain ATCC 35685 / KC583 / Herrer 020/F12,63).